The sequence spans 465 residues: Phenylalanine--tRNA ligase alpha subunit (465 aa).

L-phenylalanine is bound by residues Thr-309, 348 to 350 (QLD), and Phe-388. Glu-390 is a binding site for Mg(2+).

Belongs to the class-II aminoacyl-tRNA synthetase family. Phe-tRNA synthetase alpha subunit type 2 subfamily. As to quaternary structure, tetramer of two alpha and two beta subunits. Requires Mg(2+) as cofactor.

It localises to the cytoplasm. It carries out the reaction tRNA(Phe) + L-phenylalanine + ATP = L-phenylalanyl-tRNA(Phe) + AMP + diphosphate + H(+). This chain is Phenylalanine--tRNA ligase alpha subunit, found in Sulfolobus acidocaldarius (strain ATCC 33909 / DSM 639 / JCM 8929 / NBRC 15157 / NCIMB 11770).